The sequence spans 60 residues: Waprin-Lio1 (60 aa).

An N-terminal signal peptide occupies residues 1-8 (MLLGTTSA). One can recognise a WAP domain in the interval 9–59 (QVVRPGSCPNVDVPIPPLGLCRTTCQTDANCQEGRKCCKNGCGFMTCETAR). Cystine bridges form between Cys16-Cys46, Cys29-Cys50, Cys33-Cys45, and Cys39-Cys55.

This sequence belongs to the venom waprin family. In terms of tissue distribution, expressed by the venom gland.

The protein localises to the secreted. Its function is as follows. Damages membranes of susceptible bacteria. Has no hemolytic activity. Not toxic to mice. Does not inhibit the proteinases elastase and cathepsin G. This Erythrolamprus poecilogyrus (Water snake) protein is Waprin-Lio1.